Reading from the N-terminus, the 230-residue chain is Sugar fermentation stimulation protein homolog (230 aa).

This sequence belongs to the SfsA family.

This chain is Sugar fermentation stimulation protein homolog, found in Clostridium perfringens (strain SM101 / Type A).